We begin with the raw amino-acid sequence, 1493 residues long: Son of sevenless homolog (1493 aa).

The 205-residue stretch at 244-448 (TYESVAVDFL…ERVVGCVSDM (205 aa)) folds into the DH domain. Residues 496 to 606 (ELEKDGDLGM…WMAVLVKVTT (111 aa)) form the PH domain. Residues 656–824 (GIPVIKCGTV…TILALIEKRV (169 aa)) enclose the N-terminal Ras-GEF domain. The Ras-GEF domain occupies 897 to 1164 (HPIEIGRQLT…YNKSLEIQPK (268 aa)). 3 disordered regions span residues 1067 to 1091 (KSPP…DPEN), 1165 to 1248 (GLDT…DDAP), and 1263 to 1493 (HPKI…SSNK). The segment covering 1079 to 1088 (QQKDDLKASD) has biased composition (basic and acidic residues). 2 stretches are compositionally biased toward polar residues: residues 1208–1231 (HSQN…NTPL) and 1279–1289 (SRANQSNSVSL). Residues 1308–1326 (STATSPTTLTTTTTPSSAG) are compositionally biased toward low complexity. The segment covering 1350-1361 (LTPSRDNSSPSA) has biased composition (polar residues). Residues 1381–1400 (STSSDVSSSPSTSGSTSSAT) show a composition bias toward low complexity. The segment covering 1402-1417 (ENQEQLRVIFDREESH) has biased composition (basic and acidic residues). Over residues 1426–1435 (PLPPALPPPR) the composition is skewed to pro residues. A compositionally biased stretch (polar residues) spans 1453 to 1464 (HNSNSPTLSSEQ).

In terms of assembly, interacts with cmd-1 in the presence of Ca(2+).

In terms of biological role, promotes the exchange of Ras-bound GDP by GTP. May regulate signaling pathways downstream of receptor tyrosine kinase, egl-15 and let-23. Required for larval and male spicule development, fluid homeostasis, vulva induction, spermatogenesis, and oogenesis by promoting meiosis prophase exit during oocyte maturation. Required for the delamination of G1 cell by promoting the loss of cell junctions and detachment from the excretory system during larval development. Plays a role in nicotinic acetylcholine receptor (nAChR)-mediated sensitivity to nicotine. Regulates synaptic levels of nAchR subunit lev-1 in the nerve cord. This chain is Son of sevenless homolog, found in Caenorhabditis elegans.